We begin with the raw amino-acid sequence, 444 residues long: MTLDLSKPATAGYLSGFANEFATEALPGALPHGRNSPQRAPYGLYAEQLSGTAFTAPRGHNRRSWLYRIRPAAVHRPFEPYAGAQRLVSEFGDSADVPPTPPNQLRWDPLPMPVEPTDFVDGLVTMAGNGSAAAMNGCAIHLYAANRSMQDRFFYSADGELLIVPQQGRLFIATEFGRLDVEPFEIAVIPRGVRFAVALPDGNARGYICENFGALLRLPDLGPIGSNGLANPRDFLTPQAAYEDREGAFELIAKLNGRLWRADIGHSPLDVVAWHGNYAPYKYDLRLFNTIGSISFDHPDPSIFLVLQAQSDTPGVDTIDFVIFPPRWLAAEDTFRPPWFHRNVASEFMGLVHGAYDAKAEGFVPGGASLHNCMSGHGPDADTFEKASASDTTKPHKVDATMAFMFETRTLIRPTRYALDTAQLQADYFECWQGIKKHFNPEQR.

His-298 serves as the catalytic Proton acceptor. Residues His-341 and Glu-347 each coordinate Fe cation. Residues Tyr-356 and His-377 each coordinate homogentisate. His-377 contacts Fe cation.

Belongs to the homogentisate dioxygenase family. In terms of assembly, hexamer; dimer of trimers. The cofactor is Fe cation.

It catalyses the reaction homogentisate + O2 = 4-maleylacetoacetate + H(+). It functions in the pathway amino-acid degradation; L-phenylalanine degradation; acetoacetate and fumarate from L-phenylalanine: step 4/6. Functionally, involved in the catabolism of homogentisate (2,5-dihydroxyphenylacetate or 2,5-OH-PhAc), a central intermediate in the degradation of phenylalanine and tyrosine. Catalyzes the oxidative ring cleavage of the aromatic ring of homogentisate to yield maleylacetoacetate. This is Homogentisate 1,2-dioxygenase from Burkholderia orbicola (strain AU 1054).